We begin with the raw amino-acid sequence, 225 residues long: ATP synthase F(0) complex subunit a (225 aa).

Helical transmembrane passes span 10 to 30 (PSLL…ILLL), 69 to 89 (LILI…LLPY), 96 to 116 (QLSM…LIGL), 135 to 155 (LLIP…PIAL), 168 to 188 (LLIQ…PPLS), and 194 to 214 (VLIL…YVFV).

Belongs to the ATPase A chain family. In terms of assembly, component of the ATP synthase complex composed at least of ATP5F1A/subunit alpha, ATP5F1B/subunit beta, ATP5MC1/subunit c (homooctomer), MT-ATP6/subunit a, MT-ATP8/subunit 8, ATP5ME/subunit e, ATP5MF/subunit f, ATP5MG/subunit g, ATP5MK/subunit k, ATP5MJ/subunit j, ATP5F1C/subunit gamma, ATP5F1D/subunit delta, ATP5F1E/subunit epsilon, ATP5PF/subunit F6, ATP5PB/subunit b, ATP5PD/subunit d, ATP5PO/subunit OSCP. ATP synthase complex consists of a soluble F(1) head domain (subunits alpha(3) and beta(3)) - the catalytic core - and a membrane F(0) domain - the membrane proton channel (subunits c, a, 8, e, f, g, k and j). These two domains are linked by a central stalk (subunits gamma, delta, and epsilon) rotating inside the F1 region and a stationary peripheral stalk (subunits F6, b, d, and OSCP). Interacts with DNAJC30; interaction is direct.

It localises to the mitochondrion inner membrane. It carries out the reaction H(+)(in) = H(+)(out). Subunit a, of the mitochondrial membrane ATP synthase complex (F(1)F(0) ATP synthase or Complex V) that produces ATP from ADP in the presence of a proton gradient across the membrane which is generated by electron transport complexes of the respiratory chain. ATP synthase complex consist of a soluble F(1) head domain - the catalytic core - and a membrane F(1) domain - the membrane proton channel. These two domains are linked by a central stalk rotating inside the F(1) region and a stationary peripheral stalk. During catalysis, ATP synthesis in the catalytic domain of F(1) is coupled via a rotary mechanism of the central stalk subunits to proton translocation. With the subunit c (ATP5MC1), forms the proton-conducting channel in the F(0) domain, that contains two crucial half-channels (inlet and outlet) that facilitate proton movement from the mitochondrial intermembrane space (IMS) into the matrix. Protons are taken up via the inlet half-channel and released through the outlet half-channel, following a Grotthuss mechanism. The chain is ATP synthase F(0) complex subunit a from Alligator mississippiensis (American alligator).